The chain runs to 207 residues: Thymidine kinase (207 aa).

Residues 15–22 and 88–91 contribute to the ATP site; these read GSMFSGKS and DEVQ. Catalysis depends on Glu89, which acts as the Proton acceptor. Positions 145, 148, 183, and 186 each coordinate Zn(2+).

Belongs to the thymidine kinase family. In terms of assembly, homotetramer.

The protein localises to the cytoplasm. It carries out the reaction thymidine + ATP = dTMP + ADP + H(+). The chain is Thymidine kinase from Oceanobacillus iheyensis (strain DSM 14371 / CIP 107618 / JCM 11309 / KCTC 3954 / HTE831).